Here is a 596-residue protein sequence, read N- to C-terminus: ATP-dependent lipid A-core flippase (596 aa).

Helical transmembrane passes span 34 to 54 (VWVL…EAGI), 80 to 100 (AAVV…GYLL), 138 to 158 (AVVF…ITLV), 164 to 184 (VVFL…IVAI), 263 to 283 (QPLT…IAVV), and 292 to 312 (VGGF…LKHL). The ABC transmembrane type-1 domain maps to 38–321 (VAGVLAMAAV…LMDVNQPLQR (284 aa)). The region spanning 353-589 (IEFSHVSFSY…GGLYAHLHRI (237 aa)) is the ABC transporter domain. Position 389-396 (389-396 (GPSGSGKT)) interacts with ATP.

Belongs to the ABC transporter superfamily. Lipid exporter (TC 3.A.1.106) family. In terms of assembly, homodimer.

The protein localises to the cell inner membrane. The enzyme catalyses ATP + H2O + lipid A-core oligosaccharideSide 1 = ADP + phosphate + lipid A-core oligosaccharideSide 2.. Its function is as follows. Involved in lipopolysaccharide (LPS) biosynthesis. Translocates lipid A-core from the inner to the outer leaflet of the inner membrane. Transmembrane domains (TMD) form a pore in the inner membrane and the ATP-binding domain (NBD) is responsible for energy generation. In Burkholderia thailandensis (strain ATCC 700388 / DSM 13276 / CCUG 48851 / CIP 106301 / E264), this protein is ATP-dependent lipid A-core flippase.